The primary structure comprises 350 residues: Biotin synthase (350 aa).

The Radical SAM core domain occupies 38–265; that stretch reads NHVQVSTLLS…MSAVRLSAGR (228 aa). Residues C53, C57, and C60 each coordinate [4Fe-4S] cluster. The [2Fe-2S] cluster site is built by C97, C128, C188, and R260.

It belongs to the radical SAM superfamily. Biotin synthase family. Homodimer. The cofactor is [4Fe-4S] cluster. Requires [2Fe-2S] cluster as cofactor.

It carries out the reaction (4R,5S)-dethiobiotin + (sulfur carrier)-SH + 2 reduced [2Fe-2S]-[ferredoxin] + 2 S-adenosyl-L-methionine = (sulfur carrier)-H + biotin + 2 5'-deoxyadenosine + 2 L-methionine + 2 oxidized [2Fe-2S]-[ferredoxin]. Its pathway is cofactor biosynthesis; biotin biosynthesis; biotin from 7,8-diaminononanoate: step 2/2. Catalyzes the conversion of dethiobiotin (DTB) to biotin by the insertion of a sulfur atom into dethiobiotin via a radical-based mechanism. This chain is Biotin synthase, found in Vibrio atlanticus (strain LGP32) (Vibrio splendidus (strain Mel32)).